Here is a 337-residue protein sequence, read N- to C-terminus: Anthranilate phosphoribosyltransferase (337 aa).

5-phospho-alpha-D-ribose 1-diphosphate contacts are provided by residues glycine 81, 84–85 (GD), serine 89, 91–94 (NVST), 109–117 (KHGNRALSS), and alanine 121. Glycine 81 is an anthranilate binding site. Residue serine 93 participates in Mg(2+) binding. An anthranilate-binding site is contributed by asparagine 112. Arginine 167 contributes to the anthranilate binding site. Mg(2+) contacts are provided by aspartate 226 and glutamate 227.

The protein belongs to the anthranilate phosphoribosyltransferase family. Homodimer. Requires Mg(2+) as cofactor.

The enzyme catalyses N-(5-phospho-beta-D-ribosyl)anthranilate + diphosphate = 5-phospho-alpha-D-ribose 1-diphosphate + anthranilate. It participates in amino-acid biosynthesis; L-tryptophan biosynthesis; L-tryptophan from chorismate: step 2/5. In terms of biological role, catalyzes the transfer of the phosphoribosyl group of 5-phosphorylribose-1-pyrophosphate (PRPP) to anthranilate to yield N-(5'-phosphoribosyl)-anthranilate (PRA). The polypeptide is Anthranilate phosphoribosyltransferase (Nitrobacter hamburgensis (strain DSM 10229 / NCIMB 13809 / X14)).